A 215-amino-acid chain; its full sequence is Ribonuclease HII (215 aa).

Positions Gln19–Asp213 constitute an RNase H type-2 domain. Residues Asp25, Glu26, and Asp121 each contribute to the a divalent metal cation site.

This sequence belongs to the RNase HII family. Requires Mn(2+) as cofactor. It depends on Mg(2+) as a cofactor.

Its subcellular location is the cytoplasm. The enzyme catalyses Endonucleolytic cleavage to 5'-phosphomonoester.. Endonuclease that specifically degrades the RNA of RNA-DNA hybrids. This Synechococcus elongatus (strain ATCC 33912 / PCC 7942 / FACHB-805) (Anacystis nidulans R2) protein is Ribonuclease HII.